The primary structure comprises 417 residues: UDP-N-acetylglucosamine 1-carboxyvinyltransferase (417 aa).

22-23 (KN) provides a ligand contact to phosphoenolpyruvate. Position 91 (R91) interacts with UDP-N-acetyl-alpha-D-glucosamine. C115 (proton donor) is an active-site residue. C115 carries the post-translational modification 2-(S-cysteinyl)pyruvic acid O-phosphothioketal. UDP-N-acetyl-alpha-D-glucosamine is bound by residues 120–124 (RPVDL), D304, and I326.

The protein belongs to the EPSP synthase family. MurA subfamily.

The protein localises to the cytoplasm. It catalyses the reaction phosphoenolpyruvate + UDP-N-acetyl-alpha-D-glucosamine = UDP-N-acetyl-3-O-(1-carboxyvinyl)-alpha-D-glucosamine + phosphate. The protein operates within cell wall biogenesis; peptidoglycan biosynthesis. In terms of biological role, cell wall formation. Adds enolpyruvyl to UDP-N-acetylglucosamine. The protein is UDP-N-acetylglucosamine 1-carboxyvinyltransferase of Nitratidesulfovibrio vulgaris (strain DSM 19637 / Miyazaki F) (Desulfovibrio vulgaris).